A 165-amino-acid chain; its full sequence is Probable chemoreceptor glutamine deamidase CheD (165 aa).

Belongs to the CheD family.

The enzyme catalyses L-glutaminyl-[protein] + H2O = L-glutamyl-[protein] + NH4(+). In terms of biological role, probably deamidates glutamine residues to glutamate on methyl-accepting chemotaxis receptors (MCPs), playing an important role in chemotaxis. In Clostridium tetani (strain Massachusetts / E88), this protein is Probable chemoreceptor glutamine deamidase CheD.